The sequence spans 181 residues: Protein Syd (181 aa).

It belongs to the Syd family.

The protein resides in the cell inner membrane. Interacts with the SecY protein in vivo. May bind preferentially to an uncomplexed state of SecY, thus functioning either as a chelating agent for excess SecY in the cell or as a regulatory factor that negatively controls the translocase function. This is Protein Syd from Shigella dysenteriae serotype 1 (strain Sd197).